Here is a 940-residue protein sequence, read N- to C-terminus: Acetyl-coenzyme A synthetase (940 aa).

The first 33 residues, 1–33 (MCCAIWSASRAPACSASQLSSSHAVRPSVVPDA), serve as a signal peptide directing secretion. The segment at 1 to 289 (MCCAIWSASR…VQRSVTRLTA (289 aa)) is unknown. 3 disordered regions span residues 70–127 (TARA…RPRC), 157–202 (VAPP…ADSA), and 224–274 (ASSQ…QQTC). Composition is skewed to polar residues over residues 72-95 (RATT…TAAS) and 107-120 (SSIS…TSGS). 2 stretches are compositionally biased toward low complexity: residues 184 to 202 (TAPP…ADSA) and 224 to 245 (ASSQ…SGRS). A compositionally biased stretch (polar residues) spans 258–274 (SSPTVQRNQTTVHQQTC). Residues 290 to 940 (MSNPSHAEVP…SVFEAIRASK (651 aa)) form an acetyl-coenzyme A synthetase region. Residues 480–483 (RRGK) and threonine 599 each bind CoA. ATP is bound by residues 675-677 (GEP), 699-704 (DTWWQT), aspartate 796, and arginine 811. Serine 819 serves as a coordination point for CoA. Position 822 (arginine 822) interacts with ATP. 3 residues coordinate Mg(2+): valine 833, histidine 835, and valine 838. N6-acetyllysine is present on lysine 906.

Belongs to the ATP-dependent AMP-binding enzyme family. Mg(2+) serves as cofactor. In terms of processing, acetylated on Lys-906 by Pat in the presence of acetyl-CoA as an acetyl donor and ATP. Acetylation results in the inactivation of the enzyme. Deacetylation by the SIR2-homolog deacetylase CobB is required to activate the enzyme.

The catalysed reaction is acetate + ATP + CoA = acetyl-CoA + AMP + diphosphate. In terms of biological role, catalyzes the conversion of acetate into acetyl-CoA (AcCoA), an essential intermediate at the junction of anabolic and catabolic pathways. AcsA undergoes a two-step reaction. In the first half reaction, AcsA combines acetate with ATP to form acetyl-adenylate (AcAMP) intermediate. In the second half reaction, it can then transfer the acetyl group from AcAMP to the sulfhydryl group of CoA, forming the product AcCoA. The sequence is that of Acetyl-coenzyme A synthetase (acsA) from Mycolicibacterium smegmatis (strain ATCC 700084 / mc(2)155) (Mycobacterium smegmatis).